The sequence spans 884 residues: Kinesin-like protein KIN-7C (884 aa).

In terms of domain architecture, Kinesin motor spans 33 to 355 (RIQVLVRLRP…LLFGSCAKEV (323 aa)). 119–126 (GQTSSGKT) contributes to the ATP binding site. A coiled-coil region spans residues 364-435 (VMSDKALVKH…LQDLLQSVGD (72 aa)). Residues 434-530 (GDHDLNRQVQ…VNSRHSRPSG (97 aa)) are disordered. A compositionally biased stretch (low complexity) spans 449–460 (RSPPSVGMPPSV). Residues 461 to 483 (SRDDSSQVSHDDSDLYKEVRCIE) show a composition bias toward basic and acidic residues. The segment covering 498–523 (GESSSPQDSNMNSGLHGNDSNASVNS) has biased composition (polar residues).

Belongs to the TRAFAC class myosin-kinesin ATPase superfamily. Kinesin family. KIN-7 subfamily.

The chain is Kinesin-like protein KIN-7C from Oryza sativa subsp. japonica (Rice).